A 321-amino-acid chain; its full sequence is uncharacterized protein (321 aa).

G28 to T35 contacts ATP.

It belongs to the archaeal ATPase family.

This is an uncharacterized protein from Pyrococcus horikoshii (strain ATCC 700860 / DSM 12428 / JCM 9974 / NBRC 100139 / OT-3).